A 631-amino-acid polypeptide reads, in one-letter code: Pescadillo homolog (631 aa).

One can recognise a BRCT domain in the interval 321–414 (RLRNLFKGLK…QLLPTNKYFL (94 aa)). Disordered regions lie at residues 450-469 (HAQS…EDDT) and 489-569 (EYKK…MVKP). Phosphoserine is present on residues Ser-453 and Ser-457. Acidic residues-rich tracts occupy residues 454-469 (DDES…EDDT) and 499-524 (VNED…EELD). A coiled-coil region spans residues 510-541 (FDGEQESDEEEEELDEKTKRLQEEKKKMSVQS). Positions 525 to 536 (EKTKRLQEEKKK) are enriched in basic and acidic residues. Residues 543–552 (KVHKVNKRQL) are compositionally biased toward basic residues. Basic and acidic residues predominate over residues 553-562 (HKAEVDEHRL).

This sequence belongs to the pescadillo family.

It localises to the nucleus. The protein resides in the nucleolus. Its subcellular location is the nucleoplasm. In terms of biological role, required for maturation of ribosomal RNAs and formation of the large ribosomal subunit. This is Pescadillo homolog from Drosophila mojavensis (Fruit fly).